Here is a 189-residue protein sequence, read N- to C-terminus: Molybdopterin synthase catalytic subunit (189 aa).

Serine 20 is modified (phosphoserine). Substrate-binding positions include 143–144 (HR), lysine 159, and 166–168 (KKE).

This sequence belongs to the MoaE family. MOCS2B subfamily. Heterotetramer; composed of 2 small (MOCS2A) and 2 large (MOCS2B) subunits.

The protein resides in the cytoplasm. It is found in the cytosol. It catalyses the reaction 2 [molybdopterin-synthase sulfur-carrier protein]-C-terminal-Gly-aminoethanethioate + cyclic pyranopterin phosphate + H2O = molybdopterin + 2 [molybdopterin-synthase sulfur-carrier protein]-C-terminal Gly-Gly + 2 H(+). The protein operates within cofactor biosynthesis; molybdopterin biosynthesis. Catalytic subunit of the molybdopterin synthase complex, a complex that catalyzes the conversion of precursor Z into molybdopterin. Acts by mediating the incorporation of 2 sulfur atoms from thiocarboxylated MOCS2A into precursor Z to generate a dithiolene group. The polypeptide is Molybdopterin synthase catalytic subunit (Bos taurus (Bovine)).